Reading from the N-terminus, the 294-residue chain is Protoheme IX farnesyltransferase (294 aa).

Helical transmembrane passes span 25-45, 48-68, 92-112, 115-135, 141-161, 170-190, 216-236, 240-260, and 272-292; these read SLVLVTAAGGMWLAPGHMGAV, LVTLLATAGTVGAANALNCYW, AVALWFGISLAAVSLPALALG, VLTAALGLVALLSYVLAYTPL, AAMLVGGVPGALPPLMGWTAV, FSLFAIMFLWQMPHFIAIALF, VVLYLVALIPMTLLPFQLHIA, YLAAAVLLGLSFLGLGAWGFF, and FFFSLIYLTGLFAALALDRVP.

The protein belongs to the UbiA prenyltransferase family. Protoheme IX farnesyltransferase subfamily.

It localises to the cell inner membrane. It carries out the reaction heme b + (2E,6E)-farnesyl diphosphate + H2O = Fe(II)-heme o + diphosphate. It functions in the pathway porphyrin-containing compound metabolism; heme O biosynthesis; heme O from protoheme: step 1/1. Converts heme B (protoheme IX) to heme O by substitution of the vinyl group on carbon 2 of heme B porphyrin ring with a hydroxyethyl farnesyl side group. This Myxococcus xanthus (strain DK1622) protein is Protoheme IX farnesyltransferase.